A 1037-amino-acid polypeptide reads, in one-letter code: Probable serine/threonine-protein kinase KCC4 (1037 aa).

A Protein kinase domain is found at 21 to 285 (WKLGETLGFG…IRDILSHPLL (265 aa)). ATP is bound by residues 27–35 (LGFGSTGKV) and Lys-50. Catalysis depends on Asp-152, which acts as the Proton acceptor. Residues 372–387 (NKKNRNKIKKTKKNKR) are compositionally biased toward basic residues. Residues 372–494 (NKKNRNKIKK…MPNTKRSSLT (123 aa)) are disordered. Residues 388–404 (SSTLSSSSSLLLNNRSI) show a composition bias toward low complexity. Ser-396 bears the Phosphoserine mark. Residues 408–427 (PRRRTSKRHSREFSSSRKRS) show a composition bias toward basic residues. Polar residues predominate over residues 453–465 (NVASANTQATPSG). Residues 469–480 (PHKRNSKKRSSK) show a composition bias toward basic residues. A compositionally biased stretch (low complexity) spans 481–494 (RLSYMPNTKRSSLT). Ser-675, Ser-707, Ser-777, Ser-822, Ser-825, and Ser-871 each carry phosphoserine. 3 disordered regions span residues 746-804 (LIKE…DFPQ), 810-829 (QEYDMKDKNPNQSPISKSAE), and 861-918 (TLPS…TVKK). Residues 861–873 (TLPSLTSNNSSVG) show a composition bias toward polar residues. Residues 879–888 (GAEKGTESEK) show a composition bias toward basic and acidic residues.

Belongs to the protein kinase superfamily. CAMK Ser/Thr protein kinase family. NIM1 subfamily. As to quaternary structure, interacts with septin proteins, primarily with CDC11. Interacts with SWE1 and NAP1.

Its subcellular location is the bud neck. The catalysed reaction is L-seryl-[protein] + ATP = O-phospho-L-seryl-[protein] + ADP + H(+). It carries out the reaction L-threonyl-[protein] + ATP = O-phospho-L-threonyl-[protein] + ADP + H(+). Involved in regulation of bud growth during cell cycle and in septin organization. Plays a role in cell wall synthesis. The chain is Probable serine/threonine-protein kinase KCC4 (KCC4) from Saccharomyces cerevisiae (strain ATCC 204508 / S288c) (Baker's yeast).